We begin with the raw amino-acid sequence, 859 residues long: DNA mismatch repair protein MutS (859 aa).

622-629 (GPNMGGKS) provides a ligand contact to ATP.

The protein belongs to the DNA mismatch repair MutS family.

Its function is as follows. This protein is involved in the repair of mismatches in DNA. It is possible that it carries out the mismatch recognition step. This protein has a weak ATPase activity. This is DNA mismatch repair protein MutS from Syntrophomonas wolfei subsp. wolfei (strain DSM 2245B / Goettingen).